The following is a 913-amino-acid chain: Epithelial discoidin domain-containing receptor 1 (913 aa).

The first 18 residues, 1 to 18 (MGPEALSSLLLLLLVASG), serve as a signal peptide directing secretion. At 21-417 (DMKGHFDPAK…VAKAEGSPTA (397 aa)) the chain is on the extracellular side. Positions 31-185 (CRYALGMQDR…VCLRVELYGC (155 aa)) constitute an F5/8 type C domain. 2 disulfides stabilise this stretch: Cys-31-Cys-185 and Cys-74-Cys-177. The interval 192–367 (LSYTAPVGQT…LFSEISFISD (176 aa)) is DS-like domain. Ca(2+) contacts are provided by Asn-211, Gln-230, Asp-233, Val-235, Tyr-253, and Tyr-255. The N-linked (GlcNAc...) asparagine glycan is linked to Asn-211. N-linked (GlcNAc...) asparagine glycosylation occurs at Asn-260. A disulfide bond links Cys-303 and Cys-348. Ca(2+) contacts are provided by Ser-360 and Glu-361. N-linked (GlcNAc...) asparagine glycosylation is found at Asn-370 and Asn-394. A helical membrane pass occupies residues 418-438 (ILIGCLVAIILLLLLIIALML). Over 439-913 (WRLHWRRLLS…FLAEDALNTV (475 aa)) the chain is Cytoplasmic. The disordered stretch occupies residues 470-499 (ILINNRPGPREPPPYQEPRPRGNPPHSAPC). A compositionally biased stretch (pro residues) spans 479 to 496 (REPPPYQEPRPRGNPPHS). The PPxY motif signature appears at 481–484 (PPPY). Tyr-484, Tyr-513, and Tyr-520 each carry phosphotyrosine; by autocatalysis. The 296-residue stretch at 610 to 905 (LRFKEKLGEG…PPFSQLHRFL (296 aa)) folds into the Protein kinase domain. 616-624 (LGEGQFGEV) contributes to the ATP binding site. Residue Ser-631 is modified to Phosphoserine. An ATP-binding site is contributed by Lys-655. Tyr-740 is subject to Phosphotyrosine; by autocatalysis. Catalysis depends on Asp-766, which acts as the Proton acceptor. 3 positions are modified to phosphotyrosine; by autocatalysis: Tyr-792, Tyr-796, and Tyr-797.

It belongs to the protein kinase superfamily. Tyr protein kinase family. Insulin receptor subfamily. As to quaternary structure, homodimer. Interacts (via PPxY motif) with WWC1 (via WW domains) in a collagen-regulated manner. Forms a tripartite complex with WWC1 and PRKCZ, but predominantly in the absence of collagen. Interacts (tyrosine phosphorylated) with SHC1. Interacts with SRC. Interacts with MYH9. Interacts with CDH1. Interacts with PTPN11. Interacts with NCK2. Autophosphorylated in response to fibrillar collagen binding. In terms of processing, glycosylation of Asn-211, but apparently not of Asn-260 or Asn-394, prevents autophosphorylation from occurring in the absence of collagen. Detected in T-47D, MDA-MB-175 and HBL-100 breast carcinoma cells, A-431 epidermoid carcinoma cells, SW48 and SNU-C2B colon carcinoma cells and Hs 294T melanoma cells (at protein level). Expressed at low levels in most adult tissues and is highest in the brain, lung, placenta and kidney. Lower levels of expression are detected in melanocytes, heart, liver, skeletal muscle and pancreas. Abundant in breast carcinoma cell lines. In the colonic mucosa, expressed in epithelia but not in the connective tissue of the lamina propria. In the thyroid gland, expressed in the epithelium of the thyroid follicles. In pancreas, expressed in the islets of Langerhans cells, but not in the surrounding epithelial cells of the exocrine pancreas. In kidney, expressed in the epithelia of the distal tubules. Not expressed in connective tissue, endothelial cells, adipose tissue, muscle cells or cells of hematopoietic origin.

The protein localises to the cell membrane. Its subcellular location is the secreted. It carries out the reaction L-tyrosyl-[protein] + ATP = O-phospho-L-tyrosyl-[protein] + ADP + H(+). With respect to regulation, inhibited by the multi-targeted cancer drugs imatinib and ponatinib. Tyrosine kinase that functions as a cell surface receptor for fibrillar collagen and regulates cell attachment to the extracellular matrix, remodeling of the extracellular matrix, cell migration, differentiation, survival and cell proliferation. Collagen binding triggers a signaling pathway that involves SRC and leads to the activation of MAP kinases. Regulates remodeling of the extracellular matrix by up-regulation of the matrix metalloproteinases MMP2, MMP7 and MMP9, and thereby facilitates cell migration and wound healing. Required for normal blastocyst implantation during pregnancy, for normal mammary gland differentiation and normal lactation. Required for normal ear morphology and normal hearing. Promotes smooth muscle cell migration, and thereby contributes to arterial wound healing. Also plays a role in tumor cell invasion. Phosphorylates PTPN11. The chain is Epithelial discoidin domain-containing receptor 1 (DDR1) from Homo sapiens (Human).